A 670-amino-acid chain; its full sequence is UvrABC system protein B (670 aa).

Positions 51–433 (DGLKKGEPFQ…SSRVVEQIIR (383 aa)) constitute a Helicase ATP-binding domain. ATP is bound at residue 64 to 71 (GVTGSGKT). The Beta-hairpin signature appears at 117-140 (YYDYYQPESYLPAKDQYIEKDAMI). Residues 453–612 (DVMQEIRKIV…IVPTTIRKPI (160 aa)) enclose the Helicase C-terminal domain. Residues 631-666 (PNVIIELDAEMREAADRLDFERAIQVRELIKKLEKE) enclose the UVR domain.

Belongs to the UvrB family. Forms a heterotetramer with UvrA during the search for lesions. Interacts with UvrC in an incision complex.

Its subcellular location is the cytoplasm. Functionally, the UvrABC repair system catalyzes the recognition and processing of DNA lesions. A damage recognition complex composed of 2 UvrA and 2 UvrB subunits scans DNA for abnormalities. Upon binding of the UvrA(2)B(2) complex to a putative damaged site, the DNA wraps around one UvrB monomer. DNA wrap is dependent on ATP binding by UvrB and probably causes local melting of the DNA helix, facilitating insertion of UvrB beta-hairpin between the DNA strands. Then UvrB probes one DNA strand for the presence of a lesion. If a lesion is found the UvrA subunits dissociate and the UvrB-DNA preincision complex is formed. This complex is subsequently bound by UvrC and the second UvrB is released. If no lesion is found, the DNA wraps around the other UvrB subunit that will check the other stand for damage. The chain is UvrABC system protein B from Methanosarcina mazei (strain ATCC BAA-159 / DSM 3647 / Goe1 / Go1 / JCM 11833 / OCM 88) (Methanosarcina frisia).